The chain runs to 160 residues: CXXC motif containing zinc binding protein (160 aa).

Residues Cys-33, Cys-36, Cys-67, and Cys-70 each contribute to the Zn(2+) site. Position 75 is a phosphoserine (Ser-75).

This sequence belongs to the UPF0587 family. Monomer.

This Bos taurus (Bovine) protein is CXXC motif containing zinc binding protein (CZIB).